A 78-amino-acid chain; its full sequence is Sec-independent protein translocase protein TatA (78 aa).

A helical membrane pass occupies residues 1–21; sequence MGSLSIWHWIVVVAVILLLFG. The segment covering 43–55 has biased composition (basic and acidic residues); that stretch reads MKDDEKTAEKPEP. Residues 43–78 form a disordered region; it reads MKDDEKTAEKPEPVKTINHNADGSGAARSDTGSKVI.

The protein belongs to the TatA/E family. The Tat system comprises two distinct complexes: a TatABC complex, containing multiple copies of TatA, TatB and TatC subunits, and a separate TatA complex, containing only TatA subunits. Substrates initially bind to the TatABC complex, which probably triggers association of the separate TatA complex to form the active translocon.

It localises to the cell inner membrane. Functionally, part of the twin-arginine translocation (Tat) system that transports large folded proteins containing a characteristic twin-arginine motif in their signal peptide across membranes. TatA could form the protein-conducting channel of the Tat system. The sequence is that of Sec-independent protein translocase protein TatA from Nitrobacter winogradskyi (strain ATCC 25391 / DSM 10237 / CIP 104748 / NCIMB 11846 / Nb-255).